The following is a 388-amino-acid chain: Succinate--CoA ligase [ADP-forming] subunit beta (388 aa).

The ATP-grasp domain occupies 9–244; the sequence is KQLFARYGLP…QSQEDPREAQ (236 aa). ATP-binding positions include Lys-46, 53–55, Glu-99, Thr-102, and Glu-107; that span reads GRG. Residues Asn-199 and Asp-213 each contribute to the Mg(2+) site. Residues Asn-264 and 321–323 each bind substrate; that span reads GIV.

Belongs to the succinate/malate CoA ligase beta subunit family. In terms of assembly, heterotetramer of two alpha and two beta subunits. Mg(2+) is required as a cofactor.

It catalyses the reaction succinate + ATP + CoA = succinyl-CoA + ADP + phosphate. It carries out the reaction GTP + succinate + CoA = succinyl-CoA + GDP + phosphate. It functions in the pathway carbohydrate metabolism; tricarboxylic acid cycle; succinate from succinyl-CoA (ligase route): step 1/1. Its function is as follows. Succinyl-CoA synthetase functions in the citric acid cycle (TCA), coupling the hydrolysis of succinyl-CoA to the synthesis of either ATP or GTP and thus represents the only step of substrate-level phosphorylation in the TCA. The beta subunit provides nucleotide specificity of the enzyme and binds the substrate succinate, while the binding sites for coenzyme A and phosphate are found in the alpha subunit. The protein is Succinate--CoA ligase [ADP-forming] subunit beta of Escherichia coli O8 (strain IAI1).